The following is a 181-amino-acid chain: 28 kDa heat- and acid-stable phosphoprotein (181 aa).

Residues 1–14 show a composition bias toward basic residues; that stretch reads MPKGGRKGGHKGRV. The segment at 1–118 is disordered; that stretch reads MPKGGRKGGH…RREREEIEKQ (118 aa). Position 18 is a phosphothreonine (T18). At S19 the chain carries Phosphoserine. Residues 50-59 are compositionally biased toward basic and acidic residues; the sequence is DPKKEKKSLD. Residue K52 forms a Glycyl lysine isopeptide (Lys-Gly) (interchain with G-Cter in SUMO2) linkage. A phosphoserine mark is found at S57, S60, and S63. Residues 60-69 are compositionally biased toward acidic residues; the sequence is SDESEDEDDD. Y70 carries the phosphotyrosine modification. Over residues 102 to 118 the composition is skewed to basic and acidic residues; it reads DGPKELSRREREEIEKQ. The residue at position 126 (K126) is an N6-methyllysine. N6-acetyllysine is present on residues K132 and K164. Residues 151–167 are compositionally biased toward basic and acidic residues; the sequence is EEAARKKEEERKAKDDA. Residues 151 to 181 are disordered; the sequence is EEAARKKEEERKAKDDATLSGKRMQSLSLNK. 2 positions are modified to phosphoserine: S176 and S178.

The protein belongs to the PDAP1 family. Phosphorylated by several kinases in vitro. In vivo, can be phosphorylated by CK2. Present in all tissues tested, including brain, lung, spleen, kidney, liver, heart, and muscle, in decreasing order of abundance.

The protein is 28 kDa heat- and acid-stable phosphoprotein (Pdap1) of Rattus norvegicus (Rat).